A 466-amino-acid polypeptide reads, in one-letter code: 3-isopropylmalate dehydratase large subunit (466 aa).

[4Fe-4S] cluster is bound by residues Cys-349, Cys-410, and Cys-413.

It belongs to the aconitase/IPM isomerase family. LeuC type 1 subfamily. As to quaternary structure, heterodimer of LeuC and LeuD. Requires [4Fe-4S] cluster as cofactor.

It catalyses the reaction (2R,3S)-3-isopropylmalate = (2S)-2-isopropylmalate. It participates in amino-acid biosynthesis; L-leucine biosynthesis; L-leucine from 3-methyl-2-oxobutanoate: step 2/4. In terms of biological role, catalyzes the isomerization between 2-isopropylmalate and 3-isopropylmalate, via the formation of 2-isopropylmaleate. This Vesicomyosocius okutanii subsp. Calyptogena okutanii (strain HA) protein is 3-isopropylmalate dehydratase large subunit.